Here is a 347-residue protein sequence, read N- to C-terminus: Protein-glutamate methylesterase/protein-glutamine glutaminase 1 (347 aa).

The region spanning 6 to 123 is the Response regulatory domain; sequence RVLVVDDSAT…LRPFGDLAEK (118 aa). Asp-57 is modified (4-aspartylphosphate). One can recognise a CheB-type methylesterase domain in the interval 150-342; the sequence is FRVGRKIVAI…EEILKMTAAR (193 aa). Residues Ser-162, His-188, and Asp-284 contribute to the active site.

Belongs to the CheB family. In terms of processing, phosphorylated by CheA. Phosphorylation of the N-terminal regulatory domain activates the methylesterase activity.

It is found in the cytoplasm. It carries out the reaction [protein]-L-glutamate 5-O-methyl ester + H2O = L-glutamyl-[protein] + methanol + H(+). It catalyses the reaction L-glutaminyl-[protein] + H2O = L-glutamyl-[protein] + NH4(+). Functionally, involved in chemotaxis. Part of a chemotaxis signal transduction system that modulates chemotaxis in response to various stimuli. Catalyzes the demethylation of specific methylglutamate residues introduced into the chemoreceptors (methyl-accepting chemotaxis proteins or MCP) by CheR. Also mediates the irreversible deamidation of specific glutamine residues to glutamic acid. This chain is Protein-glutamate methylesterase/protein-glutamine glutaminase 1, found in Rhizobium johnstonii (strain DSM 114642 / LMG 32736 / 3841) (Rhizobium leguminosarum bv. viciae).